The primary structure comprises 391 residues: Probable malate dehydrogenase 1 (391 aa).

68–74 contributes to the NAD(+) binding site; the sequence is GAAGQIA. 2 residues coordinate substrate: Arg-149 and Arg-155. NAD(+) contacts are provided by residues Asn-162, Gln-169, and 186-188; that span reads VGN. 2 residues coordinate substrate: Asn-188 and Arg-219. His-244 functions as the Proton acceptor in the catalytic mechanism.

Belongs to the LDH/MDH superfamily. MDH type 2 family. In terms of assembly, homodimer.

It carries out the reaction (S)-malate + NAD(+) = oxaloacetate + NADH + H(+). In terms of biological role, catalyzes the reversible oxidation of malate to oxaloacetate. This Dictyostelium discoideum (Social amoeba) protein is Probable malate dehydrogenase 1 (mdhA).